The following is a 318-amino-acid chain: Epithelial-stromal interaction protein 1 (318 aa).

The segment at 1 to 60 (MNTRNRVVNSGLGASPASRPTRDPQDPSGRQGELSPVEDQREGLEAAPKGPSRESVVHAG) is disordered. 2 coiled-coil regions span residues 73-188 (NINR…HQQY) and 240-280 (LKAE…HQTE).

Highly expressed in placenta, small intestine, spleen, kidney, thymus, liver, salivary gland and testes. Weakly expressed in breast, skeletal muscle and colon. Highly expressed in breast cancer upon interaction between tumor cells and stromal cells in vitro. Expressed in blood mononuclear cells from patients with systemic lupus erythematosus (SLE).

Plays a role in M1 macrophage polarization and is required for the proper regulation of gene expression during M1 versus M2 macrophage differentiation. Might play a role in RELA/p65 and STAT1 phosphorylation and nuclear localization upon activation of macrophages. In Homo sapiens (Human), this protein is Epithelial-stromal interaction protein 1 (EPSTI1).